Reading from the N-terminus, the 89-residue chain is Small ribosomal subunit protein uS15 (89 aa).

The protein belongs to the universal ribosomal protein uS15 family. Part of the 30S ribosomal subunit. Forms a bridge to the 50S subunit in the 70S ribosome, contacting the 23S rRNA.

In terms of biological role, one of the primary rRNA binding proteins, it binds directly to 16S rRNA where it helps nucleate assembly of the platform of the 30S subunit by binding and bridging several RNA helices of the 16S rRNA. Its function is as follows. Forms an intersubunit bridge (bridge B4) with the 23S rRNA of the 50S subunit in the ribosome. The protein is Small ribosomal subunit protein uS15 of Pseudoalteromonas atlantica (strain T6c / ATCC BAA-1087).